The following is a 266-amino-acid chain: Phosphatidylglycerol--prolipoprotein diacylglyceryl transferase (266 aa).

A run of 7 helical transmembrane segments spans residues 19–39 (IWGP…FAFA), 61–81 (LMFW…TLFY), 91–111 (LYLF…LGVI), 125–145 (FLQV…FGRI), 176–196 (PSQL…ILWF), 204–224 (GAVS…VEFF), and 237–257 (GMSM…ILMV). An a 1,2-diacyl-sn-glycero-3-phospho-(1'-sn-glycerol)-binding site is contributed by R144.

This sequence belongs to the Lgt family.

It is found in the cell inner membrane. It carries out the reaction L-cysteinyl-[prolipoprotein] + a 1,2-diacyl-sn-glycero-3-phospho-(1'-sn-glycerol) = an S-1,2-diacyl-sn-glyceryl-L-cysteinyl-[prolipoprotein] + sn-glycerol 1-phosphate + H(+). It participates in protein modification; lipoprotein biosynthesis (diacylglyceryl transfer). Its function is as follows. Catalyzes the transfer of the diacylglyceryl group from phosphatidylglycerol to the sulfhydryl group of the N-terminal cysteine of a prolipoprotein, the first step in the formation of mature lipoproteins. This Idiomarina loihiensis (strain ATCC BAA-735 / DSM 15497 / L2-TR) protein is Phosphatidylglycerol--prolipoprotein diacylglyceryl transferase.